The primary structure comprises 345 residues: UDP-3-O-acylglucosamine N-acyltransferase (345 aa).

His-252 functions as the Proton acceptor in the catalytic mechanism.

This sequence belongs to the transferase hexapeptide repeat family. LpxD subfamily. Homotrimer.

It carries out the reaction a UDP-3-O-[(3R)-3-hydroxyacyl]-alpha-D-glucosamine + a (3R)-hydroxyacyl-[ACP] = a UDP-2-N,3-O-bis[(3R)-3-hydroxyacyl]-alpha-D-glucosamine + holo-[ACP] + H(+). It participates in bacterial outer membrane biogenesis; LPS lipid A biosynthesis. Its function is as follows. Catalyzes the N-acylation of UDP-3-O-acylglucosamine using 3-hydroxyacyl-ACP as the acyl donor. Is involved in the biosynthesis of lipid A, a phosphorylated glycolipid that anchors the lipopolysaccharide to the outer membrane of the cell. The polypeptide is UDP-3-O-acylglucosamine N-acyltransferase (Rickettsia rickettsii).